A 474-amino-acid chain; its full sequence is Methylenetetrahydrofolate--tRNA-(uracil-5-)-methyltransferase TrmFO (474 aa).

15–20 contacts FAD; it reads GAGLAG. Residues 453-474 form a disordered region; the sequence is PLLPTAPDTTGAAGEETTQAES.

This sequence belongs to the MnmG family. TrmFO subfamily. The cofactor is FAD.

The protein resides in the cytoplasm. It catalyses the reaction uridine(54) in tRNA + (6R)-5,10-methylene-5,6,7,8-tetrahydrofolate + NADH + H(+) = 5-methyluridine(54) in tRNA + (6S)-5,6,7,8-tetrahydrofolate + NAD(+). The enzyme catalyses uridine(54) in tRNA + (6R)-5,10-methylene-5,6,7,8-tetrahydrofolate + NADPH + H(+) = 5-methyluridine(54) in tRNA + (6S)-5,6,7,8-tetrahydrofolate + NADP(+). Its function is as follows. Catalyzes the folate-dependent formation of 5-methyl-uridine at position 54 (M-5-U54) in all tRNAs. This is Methylenetetrahydrofolate--tRNA-(uracil-5-)-methyltransferase TrmFO from Nitratidesulfovibrio vulgaris (strain ATCC 29579 / DSM 644 / CCUG 34227 / NCIMB 8303 / VKM B-1760 / Hildenborough) (Desulfovibrio vulgaris).